Reading from the N-terminus, the 944-residue chain is Serine/threonine-protein kinase PLK4 (944 aa).

The region spanning 12 to 265 (FKVLNLLGKG…LSSVLDHAFM (254 aa)) is the Protein kinase domain. Residues 18-26 (LGKGSFACV) and K41 each bind ATP. The Proton acceptor role is filled by D136. Disordered stretches follow at residues 327–396 (KDKH…YSER), 432–463 (RSLERHTSPPVKEKTPSEFMGPAKQTAPRSND), and 530–561 (LGIKKNPGTGQRKAEKSQFGEQSKSRVPQQAF). Positions 378 to 394 (RSGTSQSQTYAKPSSYS) are enriched in polar residues. Residues 432 to 447 (RSLERHTSPPVKEKTP) are compositionally biased toward basic and acidic residues. Polar residues predominate over residues 548–561 (FGEQSKSRVPQQAF). The region spanning 565 to 678 (TLRSIISPLN…AKFIKLVRSK (114 aa)) is the Cryptic POLO box 1 (CPB1) domain. The region spanning 679–791 (TPKVTYYTRY…GRRPALAESP (113 aa)) is the Cryptic POLO box 2 (CPB2) domain. A disordered region spans residues 786 to 809 (ALAESPKTQPTPSVDSARERKEEQ). One can recognise a POLO box domain in the interval 862–940 (QVLKSVFVEN…LSSILMLFAS (79 aa)).

It belongs to the protein kinase superfamily. Ser/Thr protein kinase family. CDC5/Polo subfamily. Homodimer. Ubiquitinated; leading to its degradation by the proteasome.

Its subcellular location is the cytoplasm. It is found in the cytoskeleton. The protein localises to the microtubule organizing center. The protein resides in the centrosome. It localises to the centriole. It carries out the reaction L-seryl-[protein] + ATP = O-phospho-L-seryl-[protein] + ADP + H(+). The catalysed reaction is L-threonyl-[protein] + ATP = O-phospho-L-threonyl-[protein] + ADP + H(+). In terms of biological role, serine/threonine-protein kinase that plays a central role in centriole duplication. Able to trigger procentriole formation on the surface of the parental centriole cylinder, leading to the recruitment of centriole biogenesis proteins such as sass6, cpap, ccp110, cep135 and gamma-tubulin. When overexpressed, it is able to induce centrosome amplification through the simultaneous generation of multiple procentrioles adjoining each parental centriole during S phase. Its central role in centriole replication suggests a possible role in tumorigenesis, centrosome aberrations being frequently observed in tumors. Also involved in deuterosome-mediated centriole amplification in multiciliated that can generate more than 100 centrioles. In Xenopus laevis (African clawed frog), this protein is Serine/threonine-protein kinase PLK4.